Here is a 131-residue protein sequence, read N- to C-terminus: Lymphocyte antigen 6E (131 aa).

The first 20 residues, 1–20 (MKIFLPVLLAALLGVERASS), serve as a signal peptide directing secretion. One can recognise a UPAR/Ly6 domain in the interval 21–101 (LMCFSCLNQK…CCQSFLCNFS (81 aa)). Cystine bridges form between C23-C48, C26-C35, C41-C71, C75-C92, and C93-C98. An N-linked (GlcNAc...) asparagine glycan is attached at N99. Residue S101 is the site of GPI-anchor amidated serine attachment. Positions 102–131 (AADGGLRASVTLLGAGLLLSLLPALLRFGP) are cleaved as a propeptide — removed in mature form.

As to quaternary structure, interacts with CHRNA4. Widely expressed, predominantly in liver, kidney, ovary, spleen and peripheral blood Leukocytes.

It is found in the cell membrane. GPI-anchored cell surface protein that regulates T-lymphocytes proliferation, differentiation, and activation. Regulates the T-cell receptor (TCR) signaling by interacting with component CD3Z/CD247 at the plasma membrane, leading to CD3Z/CD247 phosphorylation modulation. Restricts the entry of human coronaviruses, including SARS-CoV, MERS-CoV and SARS-CoV-2, by interfering with spike protein-mediated membrane fusion. Also plays an essential role in placenta formation by acting as the main receptor for syncytin-A (SynA). Therefore, participates in the normal fusion of syncytiotrophoblast layer I (SynT-I) and in the proper morphogenesis of both fetal and maternal vasculatures within the placenta. May also act as a modulator of nicotinic acetylcholine receptors (nAChRs) activity. In terms of biological role, (Microbial infection) Promotes entry, likely through an enhanced virus-cell fusion process, of various viruses including HIV-1, West Nile virus, dengue virus and Zika virus. In contrast, the paramyxovirus PIV5, which enters at the plasma membrane, does not require LY6E. Mechanistically, adopts a microtubule-like organization upon viral infection and enhances viral uncoating after endosomal escape. In Homo sapiens (Human), this protein is Lymphocyte antigen 6E.